We begin with the raw amino-acid sequence, 1291 residues long: Cytoplasmic FMR1-interacting protein (1291 aa).

Residues 1270-1291 (PSVISSSSHYQDPQKLRQSINN) form a disordered region. Residues 1271-1291 (SVISSSSHYQDPQKLRQSINN) are compositionally biased toward polar residues.

It belongs to the CYFIP family. In terms of assembly, interacts with Fmr1 and Rac1. Component of the WAVE complex composed of Hem/Kette, Scar/Wave and Cyfip where it binds through its C-terminus directly to Hem. As to expression, in the embryo, expressed mainly in the gut and in the developing central nervous system where high levels of expression are found in the CNS neuropile. Expression in the gut diminishes as development proceeds (at protein level). In the adult, expressed specifically in the nervous system.

Its subcellular location is the cytoplasm. Plays a role in guidance and morphology of central and peripheral axons and in synaptic morphology. Also required for formation of cell membrane protrusions and for bristle development. Plays a role in regulating mitochondrial activity, energy metabolism and membrane potential which maintains normal gamma-aminobutyric acid (GABA) signaling and ensures normal social behavior. The sequence is that of Cytoplasmic FMR1-interacting protein from Drosophila melanogaster (Fruit fly).